The following is a 21-amino-acid chain: Ocellatin-3 (21 aa).

Isoleucine 21 is subject to Isoleucine amide.

As to expression, expressed by the skin dorsal glands.

It is found in the secreted. Functionally, has hemolytic activity against human erythrocytes and antibacterial activity against the Gram-negative bacterium E.coli. The sequence is that of Ocellatin-3 from Leptodactylus ocellatus (Argus frog).